The chain runs to 658 residues: Threonine--tRNA ligase (658 aa).

In terms of domain architecture, TGS spans 1–64 (MSNTVSLQFP…GASGKLEIIT (64 aa)). The catalytic stretch occupies residues 246–548 (DHRRLGREMD…LIENFAGHMP (303 aa)). Cysteine 343, histidine 394, and histidine 525 together coordinate Zn(2+).

It belongs to the class-II aminoacyl-tRNA synthetase family. In terms of assembly, homodimer. Requires Zn(2+) as cofactor.

It localises to the cytoplasm. The catalysed reaction is tRNA(Thr) + L-threonine + ATP = L-threonyl-tRNA(Thr) + AMP + diphosphate + H(+). Catalyzes the attachment of threonine to tRNA(Thr) in a two-step reaction: L-threonine is first activated by ATP to form Thr-AMP and then transferred to the acceptor end of tRNA(Thr). Also edits incorrectly charged L-seryl-tRNA(Thr). In Brucella abortus (strain S19), this protein is Threonine--tRNA ligase.